We begin with the raw amino-acid sequence, 533 residues long: Phosphoenolpyruvate carboxykinase (ATP) (533 aa).

The substrate site is built by arginine 59, tyrosine 199, and lysine 205. ATP is bound by residues lysine 205, histidine 224, and 240 to 248; that span reads GLSGTGKTT. Positions 205 and 224 each coordinate Mn(2+). Aspartate 261 contacts Mn(2+). Residues glutamate 289, arginine 325, 441 to 442, and threonine 447 contribute to the ATP site; that span reads RI. Arginine 325 serves as a coordination point for substrate.

Belongs to the phosphoenolpyruvate carboxykinase (ATP) family. As to quaternary structure, monomer. It depends on Mn(2+) as a cofactor.

The protein localises to the cytoplasm. The catalysed reaction is oxaloacetate + ATP = phosphoenolpyruvate + ADP + CO2. Its pathway is carbohydrate biosynthesis; gluconeogenesis. In terms of biological role, involved in the gluconeogenesis. Catalyzes the conversion of oxaloacetate (OAA) to phosphoenolpyruvate (PEP) through direct phosphoryl transfer between the nucleoside triphosphate and OAA. The protein is Phosphoenolpyruvate carboxykinase (ATP) of Idiomarina loihiensis (strain ATCC BAA-735 / DSM 15497 / L2-TR).